Reading from the N-terminus, the 373-residue chain is Protein U3 (373 aa).

This sequence belongs to the herpesviridae US22 family.

The chain is Protein U3 (U3) from Human herpesvirus 6A (strain Uganda-1102) (HHV-6 variant A).